Consider the following 54-residue polypeptide: Large ribosomal subunit protein bL33 (54 aa).

The protein belongs to the bacterial ribosomal protein bL33 family.

The polypeptide is Large ribosomal subunit protein bL33 (Corynebacterium jeikeium (strain K411)).